Consider the following 1275-residue polypeptide: ATP-dependent helicase/nuclease subunit A (1275 aa).

In terms of domain architecture, UvrD-like helicase ATP-binding spans 4–481 (PKWTKEQLEV…IMLYKNFRSR (478 aa)). An ATP-binding site is contributed by 25–32 (AAAGSGKT). A UvrD-like helicase C-terminal domain is found at 531–839 (TEIHLIQKDN…RIMSIHKSKG (309 aa)).

Belongs to the helicase family. AddA subfamily. Heterodimer of AddA and AddB/RexB. Mg(2+) serves as cofactor.

It catalyses the reaction Couples ATP hydrolysis with the unwinding of duplex DNA by translocating in the 3'-5' direction.. The enzyme catalyses ATP + H2O = ADP + phosphate + H(+). Functionally, the heterodimer acts as both an ATP-dependent DNA helicase and an ATP-dependent, dual-direction single-stranded exonuclease. Recognizes the chi site generating a DNA molecule suitable for the initiation of homologous recombination. The AddA nuclease domain is required for chi fragment generation; this subunit has the helicase and 3' -&gt; 5' nuclease activities. This Clostridioides difficile (strain 630) (Peptoclostridium difficile) protein is ATP-dependent helicase/nuclease subunit A.